The sequence spans 167 residues: Urease accessory protein UreE (167 aa).

It belongs to the UreE family.

The protein resides in the cytoplasm. In terms of biological role, involved in urease metallocenter assembly. Binds nickel. Probably functions as a nickel donor during metallocenter assembly. The polypeptide is Urease accessory protein UreE (Pseudomonas aeruginosa (strain UCBPP-PA14)).